Reading from the N-terminus, the 537-residue chain is MAKQLAFNDAARRSLEAGIDKLANTVKVTLGPRGRNVVLDKKWGAPTITNDGVTIAREVELDDPYENLGAQLAKEVATKTNDVAGDGTTTATVLAQALVKEGLRNVAAGAAPGEIKRGIEVSVEAVAARLLENAREVEGTQVASVAAISAQSDEVGELLAEAFGKVGKDGVITIEESSTTQTELVLTEGMQFDKGYLSPYFVTDAERQEAVLEDALILINQGKISSLQDFLPLLEKALQANKPLFIIAEDIEGEALSTLIVNRIRGTLNVVAVKAPGFGDRRKAMLQDIATLTGAQVVSPDLGLTLDTVGLEVLGTARRITVTKDNTTIVDGAGTAQDVADRVAQLRAELTRTDSDWDKEKLQERLAKLAGGIGVIKVGAATEVELKEKKHRIEDAVSSTRAALEEGIVSGGGSALIHALKALDESPAVKALEGDAAAAVGIVRRALVQPLRWIAQNAGFDGFVVVAKVSELEANHGFNAKSGEYEDLIAAGVIDPVKVTRSALRNAASIAALVLTTETLVAEKPAEEEDAHAGHQH.

ATP is bound by residues 29–32 (TLGP), 86–90 (DGTTT), glycine 412, and aspartate 495.

This sequence belongs to the chaperonin (HSP60) family. As to quaternary structure, forms a cylinder of 14 subunits composed of two heptameric rings stacked back-to-back. Interacts with the co-chaperonin GroES.

The protein localises to the cytoplasm. The catalysed reaction is ATP + H2O + a folded polypeptide = ADP + phosphate + an unfolded polypeptide.. Together with its co-chaperonin GroES, plays an essential role in assisting protein folding. The GroEL-GroES system forms a nano-cage that allows encapsulation of the non-native substrate proteins and provides a physical environment optimized to promote and accelerate protein folding. This chain is Chaperonin GroEL 2, found in Paenarthrobacter aurescens (strain TC1).